A 616-amino-acid chain; its full sequence is Chaperone protein HscA (616 aa).

This sequence belongs to the heat shock protein 70 family.

In terms of biological role, chaperone involved in the maturation of iron-sulfur cluster-containing proteins. Has a low intrinsic ATPase activity which is markedly stimulated by HscB. Involved in the maturation of IscU. The chain is Chaperone protein HscA from Escherichia coli O139:H28 (strain E24377A / ETEC).